A 219-amino-acid polypeptide reads, in one-letter code: Probable GTP-binding protein EngB (219 aa).

In terms of domain architecture, EngB-type G spans 33-217 (GPLEIAFAGR…RAAICETVGH (185 aa)). GTP-binding positions include 41–48 (GRSNVGKS), 68–72 (GRTQE), 95–98 (DMPG), 162–165 (TKTD), and 196–198 (TSS). Mg(2+) is bound by residues Ser48 and Thr70.

Belongs to the TRAFAC class TrmE-Era-EngA-EngB-Septin-like GTPase superfamily. EngB GTPase family. Mg(2+) is required as a cofactor.

In terms of biological role, necessary for normal cell division and for the maintenance of normal septation. In Allorhizobium ampelinum (strain ATCC BAA-846 / DSM 112012 / S4) (Agrobacterium vitis (strain S4)), this protein is Probable GTP-binding protein EngB.